A 227-amino-acid polypeptide reads, in one-letter code: Flagellar transcriptional regulator FtcR (227 aa).

The Response regulatory domain occupies 1 to 116 (MIVVVDDRDM…EILARINAIR (116 aa)). The ompR/PhoB-type DNA-binding region spans 127 to 226 (ADGTQLGPIR…KRFLGYCINI (100 aa)).

Required for transcription of flagellar genes. This is Flagellar transcriptional regulator FtcR (ftcR) from Brucella abortus (strain 2308).